We begin with the raw amino-acid sequence, 352 residues long: Sphingosine 1-phosphate receptor 2 (352 aa).

Residues 1-34 (MGGLYSEYLNPEKVLEHYNYTKETLDMQETTSRK) lie on the Extracellular side of the membrane. N-linked (GlcNAc...) asparagine glycosylation is present at N19. Residues 35-59 (VASAFIIILCCAIVVENLLVLIAVA) form a helical membrane-spanning segment. At 60–66 (RNSKFHS) the chain is on the cytoplasmic side. A helical membrane pass occupies residues 67–95 (AMYLFLGNLAASDLLAGVAFVANTLLSGH). Over 96-109 (VTLSLTPVQWFARE) the chain is Extracellular. A helical transmembrane segment spans residues 110–128 (GSAFITLSASVFSLLAIAI). Over 129–147 (ERQVALAKVKLYGSDKSCR) the chain is Cytoplasmic. A helical membrane pass occupies residues 148-173 (MLMLIGASWLISLILGGLPILGWNCL). Residues 174–189 (NQLEACSTVLPLYAKH) are Extracellular-facing. The helical transmembrane segment at 190–210 (YVLCVVTIFSVILLAIVALYV) threads the bilayer. At 211-233 (RIYFVVRSSHADVAGPQTLALLK) the chain is on the cytoplasmic side. Residues 234 to 255 (TVTIVLGVFIICWLPAFSILLL) traverse the membrane as a helical segment. Residues 256-271 (DSTCPVRACPVLYKAH) lie on the Extracellular side of the membrane. Residues 272 to 292 (YFFAFATLNSLLNPVIYTWRS) traverse the membrane as a helical segment. Over 293-352 (RDLRREVLRPLQCWRRGKGVTGRRGGNPGHRLLPLRSSSSLERGMHMPTSPTFLEGNTVV) the chain is Cytoplasmic. C305 carries S-palmitoyl cysteine lipidation. A disordered region spans residues 333–352 (LERGMHMPTSPTFLEGNTVV).

Belongs to the G-protein coupled receptor 1 family. As to expression, most abundant in heart and lung; low, but clearly observed in kidney, liver and thymus; much lower but detectable in brain, testis, stomach and intestine. Not significantly detected in any of the sections of embryonic day (E) 14-18, except in embryonic brain.

Its subcellular location is the cell membrane. Receptor for the lysosphingolipid sphingosine 1-phosphate (S1P). S1P is a bioactive lysophospholipid that elicits diverse physiological effects on most types of cells and tissues. Receptor for the chemokine-like protein FAM19A5. Mediates the inhibitory effect of FAM19A5 on vascular smooth muscle cell proliferation and migration. In lymphoid follicles, couples the binding of S1P to the activation of GNA13 and downstream inhibition of AKT activation leading to suppression of germinal center (GC) B cell growth and migration outside the GC niche. This is Sphingosine 1-phosphate receptor 2 (S1pr2) from Mus musculus (Mouse).